A 2563-amino-acid chain; its full sequence is Highly reducing polyketide synthase 2 (2563 aa).

Positions 11–451 constitute a Ketosynthase family 3 (KS3) domain; the sequence is MSDIAIVGYS…GSNSHIVLDD (441 aa). Catalysis depends on for beta-ketoacyl synthase activity residues C182, H317, and H357. Residues 589–890 enclose the Malonyl-CoA:ACP transacylase (MAT) domain; it reads FAFTGQGAQY…DTLSEMSSAS (302 aa). The N-terminal hotdog fold stretch occupies residues 970–1101; it reads GELLGVRVSD…ANISVEFQDN (132 aa). In terms of domain architecture, PKS/mFAS DH spans 970–1269; the sequence is GELLGVRVSD…TSAVSGGITH (300 aa). The Proton acceptor; for dehydratase activity role is filled by H1002. A C-terminal hotdog fold region spans residues 1126-1269; that stretch reads TLPIDPRVFY…TSAVSGGITH (144 aa). Catalysis depends on D1186, which acts as the Proton donor; for dehydratase activity. The tract at residues 1296-1618 is methyltransferase (CMet) domain; sequence FAANAVPKDD…FSGNDLVIRD (323 aa). Positions 1858-2168 constitute an Enoyl reductase (ER) domain; that stretch reads GSLDSLQFVE…QEDTSERVIV (311 aa). The region spanning 2192-2370 is the Ketoreductase (KR) domain; it reads STYLVAGGSG…ALSLDIGWMS (179 aa). One can recognise a Carrier domain in the interval 2480 to 2561; sequence SDARERQQVV…GVAEVVEARS (82 aa). O-(pantetheine 4'-phosphoryl)serine is present on S2521.

Pantetheine 4'-phosphate is required as a cofactor.

The protein operates within secondary metabolite biosynthesis. Its function is as follows. Highly reducing polyketide synthase; part of the gene cluster that mediates the biosynthesis of the tetraketides fugralins such as linear fugralin A and cyclic fugralin B, volatile compounds that play a role in the asexual reproductive cycle but are not involved in pathogenicity. One of the key features of fugralins is the presence of a double methyl group, which is only rarely encountered in fungal secondary metabolites. As the fugralins cluster does not contain an independent methyltransferase, the PKS FGR1 is probably responsible for adding two methyl groups to the same carbon atom. Fugralin B is similar to fugralin A except for a cyclization between the carboxylic acid C-8 and the alcohol on C-4 resulting in a six membered lactone ring, probably catalyzed by the cyclase FGR4. The exact role of the individual cluster genes remains unknown and further work is needed to unravel the biosynthetic pathway. The sequence is that of Highly reducing polyketide synthase 2 from Gibberella zeae (strain ATCC MYA-4620 / CBS 123657 / FGSC 9075 / NRRL 31084 / PH-1) (Wheat head blight fungus).